The following is a 146-amino-acid chain: Hut operon positive regulatory protein (146 aa).

It belongs to the HutP family. Homohexamer.

Its function is as follows. Antiterminator that binds to cis-acting regulatory sequences on the mRNA in the presence of histidine, thereby suppressing transcription termination and activating the hut operon for histidine utilization. This chain is Hut operon positive regulatory protein, found in Bacillus cytotoxicus (strain DSM 22905 / CIP 110041 / 391-98 / NVH 391-98).